The following is a 451-amino-acid chain: Alpha-galactosidase (451 aa).

5–71 is a binding site for NAD(+); it reads PKITFIGAGS…ASGRITCHTN (67 aa). Asn151 contributes to the substrate binding site. Cys173 contributes to the Mn(2+) binding site. The active-site Proton donor is His174. Position 203 (His203) interacts with Mn(2+). A substrate-binding site is contributed by Arg287.

It belongs to the glycosyl hydrolase 4 family. Homodimer. Mn(2+) is required as a cofactor. Requires NAD(+) as cofactor.

It carries out the reaction Hydrolysis of terminal, non-reducing alpha-D-galactose residues in alpha-D-galactosides, including galactose oligosaccharides, galactomannans and galactolipids.. In Salmonella typhimurium (strain LT2 / SGSC1412 / ATCC 700720), this protein is Alpha-galactosidase (melA).